Consider the following 1034-residue polypeptide: Vacuolar membrane protease (1034 aa).

Over 1 to 11 the chain is Cytoplasmic; that stretch reads MAVKNPFGFTT. A helical transmembrane segment spans residues 12–32; sequence GPVTFWLIVVYAAFLIPLVWI. The Vacuolar portion of the chain corresponds to 33-418; sequence HESVPAVPSS…GFAILELRGL (386 aa). Residues Asn51 and Asn141 are each glycosylated (N-linked (GlcNAc...) asparagine). 2 residues coordinate Zn(2+): His200 and Asp212. The Proton acceptor role is filled by Glu246. 3 residues coordinate Zn(2+): Glu247, Glu272, and His345. A helical transmembrane segment spans residues 419–439; the sequence is FAWTLTLLIVSPLVLALVTYI. At 440–470 the chain is on the cytoplasmic side; that stretch reads LSRKDKYYFFSRKVTADEDDEPVSVGGWKGF. The chain crosses the membrane as a helical span at residues 471-491; it reads FRFPFALVLSASITVLSAFLI. Over 492–497 the chain is Vacuolar; that stretch reads RRVNPH. A helical membrane pass occupies residues 498–518; that stretch reads IIYSSPYAVWAMTLSLFFLVF. The Cytoplasmic portion of the chain corresponds to 519 to 536; the sequence is WTIAKGASVVRPSALQRG. A helical transmembrane segment spans residues 537-557; sequence YAHIWLFVISWVILVAVTAAA. The Vacuolar portion of the chain corresponds to 558-567; the sequence is DRFKIASGYP. The helical transmembrane segment at 568 to 588 threads the bilayer; the sequence is FAFFHSAVFVSALISLCDLFA. At 589 to 703 the chain is on the cytoplasmic side; it reads LPSKQEFARN…NLPSWTWFFQ (115 aa). The interval 623-653 is disordered; that stretch reads HSHVEDDVAEEPTETTPLRSGENGNGNNGTI. The helical transmembrane segment at 704-724 threads the bilayer; sequence LLLLAPITITVFLQIALFIVS. Topologically, residues 725-736 are vacuolar; sequence AIHSAAADGNDP. A helical transmembrane segment spans residues 737–757; that stretch reads ILVYAAIAAFSIIILLPATPF. Topologically, residues 758–762 are cytoplasmic; it reads IHRAS. Residues 763-783 traverse the membrane as a helical segment; the sequence is FYLPLFLLLVFFVTLIYNLVA. The Vacuolar segment spans residues 784 to 1034; that stretch reads FPFSAENRLK…LVEGRKKFRA (251 aa). Asn805, Asn866, and Asn879 each carry an N-linked (GlcNAc...) asparagine glycan.

It belongs to the peptidase M28 family. Requires Zn(2+) as cofactor.

It localises to the vacuole membrane. May be involved in vacuolar sorting and osmoregulation. The polypeptide is Vacuolar membrane protease (Colletotrichum graminicola (strain M1.001 / M2 / FGSC 10212) (Maize anthracnose fungus)).